Reading from the N-terminus, the 94-residue chain is Co-chaperonin GroES (94 aa).

The protein belongs to the GroES chaperonin family. Heptamer of 7 subunits arranged in a ring. Interacts with the chaperonin GroEL.

Its subcellular location is the cytoplasm. Its function is as follows. Together with the chaperonin GroEL, plays an essential role in assisting protein folding. The GroEL-GroES system forms a nano-cage that allows encapsulation of the non-native substrate proteins and provides a physical environment optimized to promote and accelerate protein folding. GroES binds to the apical surface of the GroEL ring, thereby capping the opening of the GroEL channel. In Clostridium perfringens (strain SM101 / Type A), this protein is Co-chaperonin GroES.